Consider the following 294-residue polypeptide: Small ribosomal subunit protein uS2 (294 aa).

A compositionally biased stretch (basic and acidic residues) spans 256-274; that stretch reads SGKFIMDEDPDSKKTKTAE. The disordered stretch occupies residues 256–294; sequence SGKFIMDEDPDSKKTKTAEEPSATIEPSTTTTVEVDQNE. Residues 280-294 show a composition bias toward polar residues; that stretch reads IEPSTTTTVEVDQNE.

Belongs to the universal ribosomal protein uS2 family.

The protein is Small ribosomal subunit protein uS2 of Leptospira interrogans serogroup Icterohaemorrhagiae serovar Lai (strain 56601).